A 500-amino-acid chain; its full sequence is Galactose/methyl galactoside import ATP-binding protein MglA (500 aa).

2 ABC transporter domains span residues 8–243 (LEME…VGRD) and 257–500 (EMIL…AKYL). Residue 40–47 (GENGAGKS) participates in ATP binding.

This sequence belongs to the ABC transporter superfamily. Galactose/methyl galactoside importer (TC 3.A.1.2.3) family. The complex is composed of one ATP-binding protein (MglA), two transmembrane proteins (MglC) and a solute-binding protein (MglB).

The protein resides in the cell inner membrane. It carries out the reaction D-galactose(out) + ATP + H2O = D-galactose(in) + ADP + phosphate + H(+). The catalysed reaction is methyl beta-D-galactoside(out) + ATP + H2O = methyl beta-D-galactoside(in) + ADP + phosphate + H(+). Its function is as follows. Part of the ABC transporter complex MglABC involved in galactose/methyl galactoside import. Responsible for energy coupling to the transport system. This chain is Galactose/methyl galactoside import ATP-binding protein MglA, found in Fusobacterium nucleatum subsp. nucleatum (strain ATCC 25586 / DSM 15643 / BCRC 10681 / CIP 101130 / JCM 8532 / KCTC 2640 / LMG 13131 / VPI 4355).